The primary structure comprises 350 residues: Isopentenyl-diphosphate delta-isomerase (350 aa).

Substrate is bound at residue 15–16 (RK). FMN-binding positions include serine 73, 74–76 (SMT), serine 104, and asparagine 132. Substrate is bound at residue 104-106 (SQR). Glutamine 167 contributes to the substrate binding site. Glutamate 168 serves as a coordination point for Mg(2+). Residues lysine 199, threonine 229, 279–281 (GLR), and 300–301 (AM) contribute to the FMN site.

This sequence belongs to the IPP isomerase type 2 family. As to quaternary structure, homooctamer. Dimer of tetramers. It depends on FMN as a cofactor. Requires NADPH as cofactor. Mg(2+) serves as cofactor.

The protein resides in the cytoplasm. It carries out the reaction isopentenyl diphosphate = dimethylallyl diphosphate. In terms of biological role, involved in the biosynthesis of isoprenoids. Catalyzes the 1,3-allylic rearrangement of the homoallylic substrate isopentenyl (IPP) to its allylic isomer, dimethylallyl diphosphate (DMAPP). This is Isopentenyl-diphosphate delta-isomerase from Nostoc sp. (strain PCC 7120 / SAG 25.82 / UTEX 2576).